The following is a 388-amino-acid chain: Interferon alpha/beta receptor 1b (388 aa).

2 Fibronectin type-III domains span residues leucine 5–aspartate 102 and proline 109–aspartate 211. A helical membrane pass occupies residues isoleucine 217–tyrosine 237. The disordered stretch occupies residues threonine 308–serine 357. The segment covering aspartate 317 to serine 326 has biased composition (basic and acidic residues). The segment covering isoleucine 331–glycine 342 has biased composition (polar residues).

This sequence belongs to the type II cytokine receptor family. As to quaternary structure, heterodimer with IFNAR2; forming the receptor for type I interferon.

Its subcellular location is the cell membrane. The protein resides in the cytoplasm. It is found in the perinuclear region. Its function is as follows. Together with IFNAR2, forms the heterodimeric receptor for type I interferons (including interferons alpha, beta, epsilon, omega and kappa). Type I interferon binding activates the JAK-STAT signaling cascade, resulting in transcriptional activation or repression of interferon-regulated genes that encode the effectors of the interferon response. Mechanistically, type I interferon-binding brings the IFNAR1 and IFNAR2 subunits into close proximity with one another, driving their associated Janus kinases (JAKs) (TYK2 bound to IFNAR1 and JAK1 bound to IFNAR2) to cross-phosphorylate one another. The activated kinases phosphorylate specific tyrosine residues on the intracellular domains of IFNAR1 and IFNAR2, forming docking sites for the STAT transcription factors. STAT proteins are then phosphorylated by the JAKs, promoting their translocation into the nucleus to regulate expression of interferon-regulated genes. This is Interferon alpha/beta receptor 1b from Oncorhynchus mykiss (Rainbow trout).